A 387-amino-acid chain; its full sequence is MANDFLFTSESVSEGHPDKVADQISDAVLDAILAQDKYARVAAETLCNTGLVVLAGEITTTANVDYIQIARDTIKRIGYDNTDYGIDYKGCAVLVAYDKQSPDIAQGVDRASDDYLNQGAGDQGLMFGYACDETPELMPFPIYYAHRLVERQSLLRRDGRLPWLRPDAKSQVTVRYVDGKPHSVDTVVLSTQHSPDITQAQIREAVIEEIIKPVLPAEMLKETKYLVNPTGRFVIGGPQGDCGLTGRKIIVDTYGGASPHGGGAFSGKDPSKVDRSAAYAARYVAKNVVASGLARQCQVQVSYAIGVARPINVTVYTEGTGKIPDAKIAELVQEHFDLRPKGIVQMLDLLRPIYEKTAAYGHFGREEPEFSWEATDKAAALRAAAGL.

An ATP-binding site is contributed by His-16. Asp-18 is a binding site for Mg(2+). Glu-44 contacts K(+). L-methionine-binding residues include Glu-57 and Gln-100. Residues 100-110 are flexible loop; it reads QSPDIAQGVDR. Residues 167–169, 232–233, Asp-241, 247–248, Ala-264, and Lys-268 each bind ATP; these read DAK, RF, and RK. Position 241 (Asp-241) interacts with L-methionine. Lys-272 contributes to the L-methionine binding site.

This sequence belongs to the AdoMet synthase family. As to quaternary structure, homotetramer; dimer of dimers. The cofactor is Mg(2+). It depends on K(+) as a cofactor.

It is found in the cytoplasm. The enzyme catalyses L-methionine + ATP + H2O = S-adenosyl-L-methionine + phosphate + diphosphate. It functions in the pathway amino-acid biosynthesis; S-adenosyl-L-methionine biosynthesis; S-adenosyl-L-methionine from L-methionine: step 1/1. In terms of biological role, catalyzes the formation of S-adenosylmethionine (AdoMet) from methionine and ATP. The overall synthetic reaction is composed of two sequential steps, AdoMet formation and the subsequent tripolyphosphate hydrolysis which occurs prior to release of AdoMet from the enzyme. This is S-adenosylmethionine synthase from Cupriavidus necator (strain ATCC 17699 / DSM 428 / KCTC 22496 / NCIMB 10442 / H16 / Stanier 337) (Ralstonia eutropha).